Reading from the N-terminus, the 152-residue chain is Small ribosomal subunit protein uS13z/uS13y/uS13x (152 aa).

At Ser-2 the chain carries N-acetylserine.

This sequence belongs to the universal ribosomal protein uS13 family.

It localises to the cytoplasm. Located at the top of the head of the 40S subunit, it contacts several helices of the 18S rRNA. This is Small ribosomal subunit protein uS13z/uS13y/uS13x (RPS18A) from Arabidopsis thaliana (Mouse-ear cress).